A 256-amino-acid polypeptide reads, in one-letter code: Undecaprenyl-diphosphatase (256 aa).

Helical transmembrane passes span 39–59, 77–97, 101–121, 135–155, 176–196, 206–226, and 233–253; these read PTDA…AVLV, RTVI…YMLF, FTGG…TGLM, ISTK…LPGV, LMVS…LDCL, LPGA…MDVL, and VSFS…TALP.

Belongs to the UppP family.

Its subcellular location is the cell membrane. The catalysed reaction is di-trans,octa-cis-undecaprenyl diphosphate + H2O = di-trans,octa-cis-undecaprenyl phosphate + phosphate + H(+). In terms of biological role, catalyzes the dephosphorylation of undecaprenyl diphosphate (UPP). This Methanothrix thermoacetophila (strain DSM 6194 / JCM 14653 / NBRC 101360 / PT) (Methanosaeta thermophila) protein is Undecaprenyl-diphosphatase.